The following is a 287-amino-acid chain: Ribosomal RNA small subunit methyltransferase I (287 aa).

The protein belongs to the methyltransferase superfamily. RsmI family.

It is found in the cytoplasm. It catalyses the reaction cytidine(1402) in 16S rRNA + S-adenosyl-L-methionine = 2'-O-methylcytidine(1402) in 16S rRNA + S-adenosyl-L-homocysteine + H(+). Its function is as follows. Catalyzes the 2'-O-methylation of the ribose of cytidine 1402 (C1402) in 16S rRNA. In Helicobacter pylori (strain ATCC 700392 / 26695) (Campylobacter pylori), this protein is Ribosomal RNA small subunit methyltransferase I.